Reading from the N-terminus, the 431-residue chain is DNA polymerase delta subunit 2 (431 aa).

This sequence belongs to the DNA polymerase delta/II small subunit family. Component of both the DNA polymerase delta and DNA polymerase zeta complexes. The DNA polymerase delta complex consisting of three subunits: the catalytic subunit PolD1 and two accessory subunits PolD2/Pol31 and PolD3/Pol32. Within the delta complex, interacts with both PolD1 and PolD3, and is able to interact with PolD1 in the absence of PolD3. Component of the DNA polymerase zeta complex consisting of four subunits: the catalytic subunit PolZ1 and three accessory subunits PolZ2/Rev7, PolD2/Pol31 and PolD3/Pol32. In terms of tissue distribution, expressed in ovaries and embryos (at the protein level).

It localises to the nucleus. The protein localises to the nucleoplasm. Its function is as follows. Accessory component of both the DNA polymerase delta complex and possibly the DNA polymerase zeta complex. As a component of the delta complex, participates in high fidelity genome replication, including lagging strand synthesis, DNA recombination and repair. Appears to promote the function of the DNA pol-delta complex accessory subunit PolD3 in both embryonic and postembryonic somatic cells. The chain is DNA polymerase delta subunit 2 from Drosophila melanogaster (Fruit fly).